Consider the following 409-residue polypeptide: tRNA-specific 2-thiouridylase MnmA (409 aa).

Residues Ala-20–Ser-27 and Leu-46 contribute to the ATP site. The active-site Nucleophile is Cys-114. Cysteines 114 and 210 form a disulfide. An ATP-binding site is contributed by Gly-138. The tract at residues Arg-160–Gln-162 is interaction with tRNA. Cys-210 serves as the catalytic Cysteine persulfide intermediate.

This sequence belongs to the MnmA/TRMU family.

It is found in the cytoplasm. The enzyme catalyses S-sulfanyl-L-cysteinyl-[protein] + uridine(34) in tRNA + AH2 + ATP = 2-thiouridine(34) in tRNA + L-cysteinyl-[protein] + A + AMP + diphosphate + H(+). Its function is as follows. Catalyzes the 2-thiolation of uridine at the wobble position (U34) of tRNA, leading to the formation of s(2)U34. This Bartonella henselae (strain ATCC 49882 / DSM 28221 / CCUG 30454 / Houston 1) (Rochalimaea henselae) protein is tRNA-specific 2-thiouridylase MnmA.